A 284-amino-acid polypeptide reads, in one-letter code: RAD52 motif-containing protein 1 (284 aa).

The segment at 1-92 (MAELVPFAVP…KQLFQKSPVK (92 aa)) is necessary for nuclear localization and for nucleolar accumulation in response to heat shock. An RRM domain is found at 15–98 (KTLLVWELSS…SPVKVRLGTR (84 aa)). Residues 90–133 (PVKVRLGTRHKAVQHQALALNSSKCQELANYYFGFNGCSKRIIK) are necessary for nuclear and nucleolar localization.

Homodimer. In terms of tissue distribution, expressed in testis.

Its subcellular location is the nucleus. The protein resides in the cytoplasm. The protein localises to the nucleolus. It is found in the PML body. It localises to the cajal body. In terms of biological role, may confer resistance to the antitumor agent cisplatin. Binds to DNA and RNA. This is RAD52 motif-containing protein 1 (RDM1) from Homo sapiens (Human).